The primary structure comprises 272 residues: Undecaprenyl-diphosphatase (272 aa).

7 consecutive transmembrane segments (helical) span residues 6–26 (SLLI…LPVS), 45–65 (AKTF…VMFW), 92–112 (THIL…HDVI), 115–135 (LFYP…LLAA), 189–209 (YAAS…ATVL), 221–241 (ADVP…LIAI), and 251–271 (ISFI…YMVF).

Belongs to the UppP family.

The protein resides in the cell inner membrane. The catalysed reaction is di-trans,octa-cis-undecaprenyl diphosphate + H2O = di-trans,octa-cis-undecaprenyl phosphate + phosphate + H(+). In terms of biological role, catalyzes the dephosphorylation of undecaprenyl diphosphate (UPP). Confers resistance to bacitracin. In Pectobacterium atrosepticum (strain SCRI 1043 / ATCC BAA-672) (Erwinia carotovora subsp. atroseptica), this protein is Undecaprenyl-diphosphatase.